Reading from the N-terminus, the 97-residue chain is Putative pterin-4-alpha-carbinolamine dehydratase (97 aa).

This sequence belongs to the pterin-4-alpha-carbinolamine dehydratase family.

It catalyses the reaction (4aS,6R)-4a-hydroxy-L-erythro-5,6,7,8-tetrahydrobiopterin = (6R)-L-erythro-6,7-dihydrobiopterin + H2O. The sequence is that of Putative pterin-4-alpha-carbinolamine dehydratase from Brucella abortus (strain S19).